The following is an 854-amino-acid chain: V-type proton ATPase 116 kDa subunit a 2 (854 aa).

Residues 1 to 393 (MGSLFRSETM…DAYGVGSYQE (393 aa)) are Cytoplasmic-facing. A helical transmembrane segment spans residues 394–412 (VNPALFTIITFPFLFAVMF). The Vacuolar portion of the chain corresponds to 413-414 (GD). Residues 415 to 431 (FGHGFVMFLFALLLVLN) traverse the membrane as a helical segment. At 432–445 (ENHPRLNQSQEIMR) the chain is on the cytoplasmic side. Residues 446–475 (MFFNGRYILLLMGLFSVYTGLIYNDCFSKS) traverse the membrane as a helical segment. Residues 476 to 549 (VNLFGSRWNV…ATNRLTFLNS (74 aa)) are Vacuolar-facing. A helical membrane pass occupies residues 550–569 (FKMKMSVILGITHMTFGVIL). Over 570–587 (GIFNHLHFRKKFNICLVS) the chain is Cytoplasmic. Residues 588–608 (IPELLFMLCIFGYLIFMIIYK) traverse the membrane as a helical segment. Over 609-651 (WLVYSAETSRTAPSILIEFISMFLFLASDTGGLYPGQEHVQRL) the chain is Vacuolar. A helical membrane pass occupies residues 652–671 (LLLITVLSVPVLFLGKPLFL). The Cytoplasmic portion of the chain corresponds to 672-739 (LWLHRGRSCF…EILMTQIIHS (68 aa)). Phosphoserine occurs at positions 695 and 700. The chain crosses the membrane as a helical span at residues 740-764 (IEYCLGCISNTASYLRLWALSLAHA). Residues 765 to 785 (QLSEVLWAMLMHVGLRVDTAY) are Vacuolar-facing. Residues 786-824 (GVLVLLPVIAFFAVLTIFILLIMEGLSAFLHAIRLHWVE) form a helical membrane-spanning segment. Over 825–854 (FQNKFYVGAGTKFVPFSFRLLSSKFSDDLA) the chain is Cytoplasmic.

This sequence belongs to the V-ATPase 116 kDa subunit family. As to quaternary structure, V-ATPase is a heteromultimeric enzyme made up of two complexes: the ATP-hydrolytic V1 complex and the proton translocation V0 complex. The V1 complex consists of three catalytic AB heterodimers that form a heterohexamer, three peripheral stalks each consisting of EG heterodimers, one central rotor including subunits D and F, and the regulatory subunits C and H. The proton translocation complex V0 consists of the proton transport subunit a, a ring of proteolipid subunits c9c'', rotary subunit d, subunits e and f, and the accessory subunits ATP6AP1/Ac45 and ATP6AP2/PRR. Directly interacts with PSCD2 through its N-terminal cytosolic tail in an intra-endosomal acidification-dependent manner. Disruption of this interaction results in the inhibition of endocytosis. Interacts with SPAAR. As to expression, highly expressed in lung, kidney and spleen.

It localises to the cell membrane. It is found in the endosome membrane. Functionally, subunit of the V0 complex of vacuolar(H+)-ATPase (V-ATPase), a multisubunit enzyme composed of a peripheral complex (V1) that hydrolyzes ATP and a membrane integral complex (V0) that translocates protons. V-ATPase is responsible for acidifying and maintaining the pH of intracellular compartments and in some cell types, is targeted to the plasma membrane, where it is responsible for acidifying the extracellular environment. Essential component of the endosomal pH-sensing machinery. May play a role in maintaining the Golgi functions, such as glycosylation maturation, by controlling the Golgi pH. In aerobic conditions, involved in intracellular iron homeostasis, thus triggering the activity of Fe(2+) prolyl hydroxylase (PHD) enzymes, and leading to HIF1A hydroxylation and subsequent proteasomal degradation. This Bos taurus (Bovine) protein is V-type proton ATPase 116 kDa subunit a 2 (ATP6V0A2).